Consider the following 126-residue polypeptide: Protein ApaG (126 aa).

One can recognise an ApaG domain in the interval 2-126; the sequence is DISTPCIKCQ…FRLAIPNILN (125 aa).

The protein is Protein ApaG of Vibrio atlanticus (strain LGP32) (Vibrio splendidus (strain Mel32)).